A 581-amino-acid polypeptide reads, in one-letter code: Arginine--tRNA ligase (581 aa).

A 'HIGH' region motif is present at residues 122–132 (PNVAKPMHVGH).

It belongs to the class-I aminoacyl-tRNA synthetase family. As to quaternary structure, monomer.

The protein localises to the cytoplasm. The catalysed reaction is tRNA(Arg) + L-arginine + ATP = L-arginyl-tRNA(Arg) + AMP + diphosphate. This is Arginine--tRNA ligase from Francisella tularensis subsp. tularensis (strain FSC 198).